Consider the following 249-residue polypeptide: Small ribosomal subunit protein eS6 (249 aa).

Lys14 is covalently cross-linked (Glycyl lysine isopeptide (Lys-Gly) (interchain with G-Cter in SUMO2)). At Glu35 the chain carries ADP-ribosyl glutamic acid. Arg137 is modified ((3R)-3-hydroxyarginine). Ser148 carries the post-translational modification Phosphoserine. Lys211 is modified (N6-acetyllysine). Residues 217–229 (MKEAKEKRQEQIA) are compositionally biased toward basic and acidic residues. Residues 217-249 (MKEAKEKRQEQIAKRRRLSSLRASTSKSESSQK) form a disordered region. 6 positions are modified to phosphoserine: Ser235, Ser236, Ser240, Ser242, Ser244, and Ser247. Residues 236-249 (SLRASTSKSESSQK) are compositionally biased toward low complexity.

The protein belongs to the eukaryotic ribosomal protein eS6 family. Component of the small ribosomal subunit. Part of the small subunit (SSU) processome, composed of more than 70 proteins and the RNA chaperone small nucleolar RNA (snoRNA) U3. In terms of processing, ribosomal protein S6 is the major substrate of protein kinases in eukaryote ribosomes. The phosphorylation is stimulated by growth factors, tumor promoting agents, and mitogens. It is dephosphorylated at growth arrest. Phosphorylated at Ser-235 and Ser-236 by RPS6KA1 and RPS6KA3; phosphorylation at these sites facilitates the assembly of the pre-initiation complex. Post-translationally, specifically hydroxylated (with R stereochemistry) at C-3 of Arg-137 by KDM8. Mono-ADP-ribosylation at Glu-35 by PARP16 inhibits polysome assembly and mRNA loading, thereby inhibiting protein translation.

The protein resides in the cytoplasm. It localises to the nucleus. Its subcellular location is the nucleolus. Its function is as follows. Component of the 40S small ribosomal subunit. Plays an important role in controlling cell growth and proliferation through the selective translation of particular classes of mRNA. Part of the small subunit (SSU) processome, first precursor of the small eukaryotic ribosomal subunit. During the assembly of the SSU processome in the nucleolus, many ribosome biogenesis factors, an RNA chaperone and ribosomal proteins associate with the nascent pre-rRNA and work in concert to generate RNA folding, modifications, rearrangements and cleavage as well as targeted degradation of pre-ribosomal RNA by the RNA exosome. The polypeptide is Small ribosomal subunit protein eS6 (RPS6) (Oryctolagus cuniculus (Rabbit)).